Consider the following 263-residue polypeptide: MARGPKKHLKRVAAPKHWMLDKLTGVFAPRPSTGPHKLRECLPLIIFLRNRLKYALTGDEVKKICMQRFIKIDGKVRTDITYPAGFMDVISIEKTGEHFRLVYDTKGRFAVHRITAEEAKYKLCKVRKIFVGTKGIPHLVTHDARTIRYPDPLIKVNDTIQIDLETGKITDFIKFDTGNLCMVTGGANLGRIGVITNRERHPGSFDVVHVKDANGNSFATRLSNIFVIGKGNKPWISLPRGKGIRLTIAEERDKRLAAKQSSG.

In terms of domain architecture, S4 RNA-binding spans 42-104; the sequence is LPLIIFLRNR…TGEHFRLVYD (63 aa).

This sequence belongs to the eukaryotic ribosomal protein eS4 family.

The protein is Small ribosomal subunit protein eS4 (RPS4) of Gallus gallus (Chicken).